The following is a 286-amino-acid chain: Pantothenate synthetase (286 aa).

Methionine 30 to histidine 37 serves as a coordination point for ATP. Histidine 37 functions as the Proton donor in the catalytic mechanism. Glutamine 61 lines the (R)-pantoate pocket. Glutamine 61 serves as a coordination point for beta-alanine. Glycine 149–aspartate 152 contributes to the ATP binding site. Glutamine 155 contributes to the (R)-pantoate binding site. ATP contacts are provided by residues valine 178 and methionine 186–arginine 189.

Belongs to the pantothenate synthetase family. Homodimer.

The protein resides in the cytoplasm. The catalysed reaction is (R)-pantoate + beta-alanine + ATP = (R)-pantothenate + AMP + diphosphate + H(+). Its pathway is cofactor biosynthesis; (R)-pantothenate biosynthesis; (R)-pantothenate from (R)-pantoate and beta-alanine: step 1/1. Functionally, catalyzes the condensation of pantoate with beta-alanine in an ATP-dependent reaction via a pantoyl-adenylate intermediate. This is Pantothenate synthetase from Thioalkalivibrio sulfidiphilus (strain HL-EbGR7).